Reading from the N-terminus, the 382-residue chain is Cell division protein FtsZ (382 aa).

GTP is bound by residues 21 to 25 (GGGSN), 108 to 110 (GTG), E139, R143, and D187. The tract at residues 322 to 382 (RAQQQSNFNR…FLRNRRRKSR (61 aa)) is disordered. Residues 340 to 352 (KSKEKEAEKKEPR) are compositionally biased toward basic and acidic residues.

Belongs to the FtsZ family. In terms of assembly, homodimer. Polymerizes to form a dynamic ring structure in a strictly GTP-dependent manner. Interacts directly with several other division proteins.

Its subcellular location is the cytoplasm. In terms of biological role, essential cell division protein that forms a contractile ring structure (Z ring) at the future cell division site. The regulation of the ring assembly controls the timing and the location of cell division. One of the functions of the FtsZ ring is to recruit other cell division proteins to the septum to produce a new cell wall between the dividing cells. Binds GTP and shows GTPase activity. The polypeptide is Cell division protein FtsZ (Halalkalibacterium halodurans (strain ATCC BAA-125 / DSM 18197 / FERM 7344 / JCM 9153 / C-125) (Bacillus halodurans)).